The sequence spans 1198 residues: Chromosome partition protein Smc (1198 aa).

40–47 (PNGSGKSN) is a binding site for ATP. 2 coiled-coil regions span residues 175-211 (ITKY…GQLG) and 322-524 (LGEQ…LAKK). In terms of domain architecture, SMC hinge spans 534–647 (CGTLADLLQV…VTDMEAATRV (114 aa)). Residues 687 to 1042 (SREIQELRQE…AELDKTMSER (356 aa)) are a coiled coil. The tract at residues 785 to 818 (AEEQSKLTDSIQEAQEALARQEEKNRQASREMEQ) is disordered. The segment covering 803–818 (ARQEEKNRQASREMEQ) has biased composition (basic and acidic residues).

This sequence belongs to the SMC family. Homodimer.

The protein localises to the cytoplasm. Required for chromosome condensation and partitioning. The sequence is that of Chromosome partition protein Smc from Desulfitobacterium hafniense (strain Y51).